The chain runs to 464 residues: Glutamate--tRNA ligase 1 (464 aa).

Positions 10 to 20 (PSPTGYLHIGG) match the 'HIGH' region motif. The short motif at 238–242 (KLSKR) is the 'KMSKS' region element. Residue Lys241 coordinates ATP.

The protein belongs to the class-I aminoacyl-tRNA synthetase family. Glutamate--tRNA ligase type 1 subfamily. In terms of assembly, monomer.

The protein localises to the cytoplasm. It catalyses the reaction tRNA(Glu) + L-glutamate + ATP = L-glutamyl-tRNA(Glu) + AMP + diphosphate. In terms of biological role, catalyzes the attachment of glutamate to tRNA(Glu) in a two-step reaction: glutamate is first activated by ATP to form Glu-AMP and then transferred to the acceptor end of tRNA(Glu). This Helicobacter hepaticus (strain ATCC 51449 / 3B1) protein is Glutamate--tRNA ligase 1.